We begin with the raw amino-acid sequence, 183 residues long: MKQPDRNQQQGAKSNRPAINDEIRAKEVRLVGADGEQKGIVSLNEALRAAEDADLDLVEIVANAEPPVCKIMDYNKHLFDLKQKQKDAKKKQHQVQVKEIKLRPATDVGDYQVKLRAILKFLEEGNKVKITLRFRGREMAHQQLGLAQLQKIEADVAELGVVEQAPKMEGRQMGMLLGPKKKK.

Positions 1-13 (MKQPDRNQQQGAK) are enriched in polar residues. The interval 1–21 (MKQPDRNQQQGAKSNRPAIND) is disordered.

Belongs to the IF-3 family. In terms of assembly, monomer.

The protein resides in the cytoplasm. Functionally, IF-3 binds to the 30S ribosomal subunit and shifts the equilibrium between 70S ribosomes and their 50S and 30S subunits in favor of the free subunits, thus enhancing the availability of 30S subunits on which protein synthesis initiation begins. The sequence is that of Translation initiation factor IF-3 from Acinetobacter baumannii (strain AYE).